Reading from the N-terminus, the 454-residue chain is Probable 1,4-beta-D-glucan cellobiohydrolase C (454 aa).

The N-terminal stretch at Met-1–Ala-19 is a signal peptide. The CBM1 domain occupies Gln-20–Ile-55. Disulfide bonds link Cys-27-Cys-44 and Cys-38-Cys-54. Thr-rich linker regions lie at residues Thr-59 to Thr-94 and Ala-95 to Phe-454. The tract at residues Thr-68–Ala-95 is disordered. Residue Asp-184 is part of the active site. 2 disulfides stabilise this stretch: Cys-185-Cys-244 and Cys-376-Cys-423. Asp-230 functions as the Proton donor in the catalytic mechanism. Asp-409 serves as the catalytic Nucleophile. Asn-413 is a glycosylation site (N-linked (GlcNAc...) asparagine).

The protein belongs to the glycosyl hydrolase 6 (cellulase B) family.

It localises to the secreted. It carries out the reaction Hydrolysis of (1-&gt;4)-beta-D-glucosidic linkages in cellulose and cellotetraose, releasing cellobiose from the non-reducing ends of the chains.. The biological conversion of cellulose to glucose generally requires three types of hydrolytic enzymes: (1) Endoglucanases which cut internal beta-1,4-glucosidic bonds; (2) Exocellobiohydrolases that cut the disaccharide cellobiose from the non-reducing end of the cellulose polymer chain; (3) Beta-1,4-glucosidases which hydrolyze the cellobiose and other short cello-oligosaccharides to glucose. In Aspergillus fumigatus (strain CBS 144.89 / FGSC A1163 / CEA10) (Neosartorya fumigata), this protein is Probable 1,4-beta-D-glucan cellobiohydrolase C (cbhC).